Consider the following 79-residue polypeptide: Small ribosomal subunit protein bS18 (79 aa).

It belongs to the bacterial ribosomal protein bS18 family. Part of the 30S ribosomal subunit. Forms a tight heterodimer with protein bS6.

Binds as a heterodimer with protein bS6 to the central domain of the 16S rRNA, where it helps stabilize the platform of the 30S subunit. The polypeptide is Small ribosomal subunit protein bS18 (Renibacterium salmoninarum (strain ATCC 33209 / DSM 20767 / JCM 11484 / NBRC 15589 / NCIMB 2235)).